Reading from the N-terminus, the 513-residue chain is MTRVINLDGESLTLEDVIAIARQGVACRIDDSAIEAVNASRKIVDDIVSEKRVVYGVTTGFGSLCNVSISPEDTVQLQENLIRTHASGFGDPLPEDAVRAIMLIRINSLVKGYSGIRLSTIEKLLELLNKGVHPYIPEKGSLGASGDLAPLAHMVLPMLGLGKAYYKGEFLSGQEALDKAGIDKISLAAKEGLALINGTTVLTAIGALATYDAIQLLKLSDLAGALSLEVHNGITSPFEENLHTIRPQSGQLATARNIRNLLEGSQNTTVATQSRVQDPYTLRCMPQIHGASKDSIAYVKSKVDIEINSVTDNPIICKDGHVISGGNFHGEPMAQPFDFLGIAISEIGNVSERRVERLVNSQLSKLPSFLVKYPGLNSGFMITQYACASLASENKVLAHPASVDSIPSCENQEDFVSMGTTAARKAFEILKNSRRIVATEIMAACQALDLKPENHELGKGTKVAYDLFRKEVNFIEHDKHIEIYDELNKASTVIEDPSFLEAVEQAVELSIQF.

A cross-link (5-imidazolinone (Ala-Gly)) is located at residues 144–146 (ASG). 2,3-didehydroalanine (Ser) is present on serine 145.

Belongs to the PAL/histidase family. Contains an active site 4-methylidene-imidazol-5-one (MIO), which is formed autocatalytically by cyclization and dehydration of residues Ala-Ser-Gly.

The protein localises to the cytoplasm. It carries out the reaction L-histidine = trans-urocanate + NH4(+). Its pathway is amino-acid degradation; L-histidine degradation into L-glutamate; N-formimidoyl-L-glutamate from L-histidine: step 1/3. The sequence is that of Histidine ammonia-lyase from Streptococcus pyogenes serotype M5 (strain Manfredo).